Here is a 1025-residue protein sequence, read N- to C-terminus: Exportin-T (1025 aa).

Belongs to the exportin family.

It is found in the nucleus. Its subcellular location is the cytoplasm. Its function is as follows. tRNA nucleus export receptor which facilitates tRNA translocation across the nuclear pore complex. Involved in pre-tRNA splicing, probably by affecting the interaction of pre-tRNA with splicing endonuclease. The protein is Exportin-T (LOS1) of Yarrowia lipolytica (strain CLIB 122 / E 150) (Yeast).